Here is a 250-residue protein sequence, read N- to C-terminus: Purine nucleoside phosphorylase BQ2027_MB2173C (250 aa).

3 residues coordinate Zn(2+): His77, Cys114, and His131.

The protein belongs to the purine nucleoside phosphorylase YfiH/LACC1 family. Homodimer. Cu(2+) is required as a cofactor. Zn(2+) serves as cofactor.

It catalyses the reaction adenosine + phosphate = alpha-D-ribose 1-phosphate + adenine. The catalysed reaction is S-methyl-5'-thioadenosine + phosphate = 5-(methylsulfanyl)-alpha-D-ribose 1-phosphate + adenine. It carries out the reaction inosine + phosphate = alpha-D-ribose 1-phosphate + hypoxanthine. The enzyme catalyses adenosine + H2O + H(+) = inosine + NH4(+). In terms of biological role, purine nucleoside enzyme that catalyzes the phosphorolysis of adenosine and inosine nucleosides, yielding D-ribose 1-phosphate and the respective free bases, adenine and hypoxanthine. Also catalyzes the phosphorolysis of S-methyl-5'-thioadenosine into adenine and S-methyl-5-thio-alpha-D-ribose 1-phosphate. Also has adenosine deaminase activity. The chain is Purine nucleoside phosphorylase BQ2027_MB2173C from Mycobacterium bovis (strain ATCC BAA-935 / AF2122/97).